The chain runs to 156 residues: Small ribosomal subunit protein uS7 (156 aa).

It belongs to the universal ribosomal protein uS7 family. As to quaternary structure, part of the 30S ribosomal subunit. Contacts proteins S9 and S11.

One of the primary rRNA binding proteins, it binds directly to 16S rRNA where it nucleates assembly of the head domain of the 30S subunit. Is located at the subunit interface close to the decoding center, probably blocks exit of the E-site tRNA. This chain is Small ribosomal subunit protein uS7, found in Shewanella amazonensis (strain ATCC BAA-1098 / SB2B).